The chain runs to 370 residues: Ubiquinone biosynthesis O-methyltransferase, mitochondrial (370 aa).

Residues 1–86 constitute a mitochondrion transit peptide; sequence MWGGSKLSSS…SYRLPWTRPY (86 aa). An S-adenosyl-L-methionine-binding site is contributed by arginine 125. N6-acetyllysine occurs at positions 144 and 150. S-adenosyl-L-methionine-binding residues include glycine 155 and aspartate 176. At lysine 197 the chain carries N6-acetyllysine. Residue serine 223 participates in S-adenosyl-L-methionine binding. Positions 224, 227, and 228 each coordinate Mg(2+).

It belongs to the class I-like SAM-binding methyltransferase superfamily. UbiG/COQ3 family. In terms of assembly, component of a multi-subunit COQ enzyme complex, composed of at least COQ3, COQ4, COQ5, COQ6, COQ7 and COQ9. Mg(2+) is required as a cofactor.

The protein resides in the mitochondrion inner membrane. The catalysed reaction is 3,4-dihydroxy-5-(all-trans-decaprenyl)benzoate + S-adenosyl-L-methionine = 4-hydroxy-3-methoxy-5-(all-trans-decaprenyl)benzoate + S-adenosyl-L-homocysteine + H(+). The enzyme catalyses a 3-demethylubiquinone + S-adenosyl-L-methionine = a ubiquinone + S-adenosyl-L-homocysteine. It carries out the reaction 3-demethylubiquinol-10 + S-adenosyl-L-methionine = ubiquinol-10 + S-adenosyl-L-homocysteine + H(+). It participates in cofactor biosynthesis; ubiquinone biosynthesis. O-methyltransferase required for two non-consecutive steps during ubiquinone biosynthesis. Catalyzes the 2 O-methylation of 3,4-dihydroxy-5-(all-trans-decaprenyl)benzoic acid into 4-hydroxy-3-methoxy-5-(all-trans-decaprenyl)benzoic acid. Also catalyzes the last step of ubiquinone biosynthesis by mediating methylation of 3-demethylubiquinone into ubiquinone. Also able to mediate the methylation of 3-demethylubiquinol-10 into ubiquinol-10. The protein is Ubiquinone biosynthesis O-methyltransferase, mitochondrial of Bos taurus (Bovine).